We begin with the raw amino-acid sequence, 722 residues long: Glycine--tRNA ligase beta subunit (722 aa).

It belongs to the class-II aminoacyl-tRNA synthetase family. Tetramer of two alpha and two beta subunits.

It is found in the cytoplasm. The catalysed reaction is tRNA(Gly) + glycine + ATP = glycyl-tRNA(Gly) + AMP + diphosphate. This Xylella fastidiosa (strain M12) protein is Glycine--tRNA ligase beta subunit.